Reading from the N-terminus, the 441-residue chain is Serine--tRNA ligase (441 aa).

250–252 contributes to the L-serine binding site; sequence TSE. ATP-binding positions include 281 to 283 and V297; that span reads RRE. L-serine is bound at residue E304. 368 to 371 contacts ATP; the sequence is EIVS. Residue T402 participates in L-serine binding.

Belongs to the class-II aminoacyl-tRNA synthetase family. Type-1 seryl-tRNA synthetase subfamily. As to quaternary structure, homodimer. The tRNA molecule binds across the dimer.

Its subcellular location is the cytoplasm. It catalyses the reaction tRNA(Ser) + L-serine + ATP = L-seryl-tRNA(Ser) + AMP + diphosphate + H(+). The catalysed reaction is tRNA(Sec) + L-serine + ATP = L-seryl-tRNA(Sec) + AMP + diphosphate + H(+). Its pathway is aminoacyl-tRNA biosynthesis; selenocysteinyl-tRNA(Sec) biosynthesis; L-seryl-tRNA(Sec) from L-serine and tRNA(Sec): step 1/1. Its function is as follows. Catalyzes the attachment of serine to tRNA(Ser). Is also able to aminoacylate tRNA(Sec) with serine, to form the misacylated tRNA L-seryl-tRNA(Sec), which will be further converted into selenocysteinyl-tRNA(Sec). In Thermoplasma volcanium (strain ATCC 51530 / DSM 4299 / JCM 9571 / NBRC 15438 / GSS1), this protein is Serine--tRNA ligase.